Consider the following 120-residue polypeptide: Crustacean hyperglycemic hormones 4 (120 aa).

The first 26 residues, 1–26 (MVALNTLSAVSAALLVLAASPSPASA), serve as a signal peptide directing secretion. 3 disulfide bridges follow: cysteine 53/cysteine 89, cysteine 69/cysteine 85, and cysteine 72/cysteine 98. Valine 118 carries the post-translational modification Valine amide.

This sequence belongs to the arthropod CHH/MIH/GIH/VIH hormone family.

It is found in the secreted. Its function is as follows. Hormone found in the sinus gland of isopods and decapods which controls the blood sugar level. Has a secretagogue action over the amylase released from the midgut gland. May act as a stress hormone and may be involved in the control of molting and reproduction. The polypeptide is Crustacean hyperglycemic hormones 4 (CHH4) (Penaeus monodon (Giant tiger prawn)).